Here is a 172-residue protein sequence, read N- to C-terminus: 3-hydroxydecanoyl-[acyl-carrier-protein] dehydratase (172 aa).

His71 is a catalytic residue.

Belongs to the thioester dehydratase family. FabA subfamily. In terms of assembly, homodimer.

The protein resides in the cytoplasm. It carries out the reaction a (3R)-hydroxyacyl-[ACP] = a (2E)-enoyl-[ACP] + H2O. The enzyme catalyses (3R)-hydroxydecanoyl-[ACP] = (2E)-decenoyl-[ACP] + H2O. The catalysed reaction is (2E)-decenoyl-[ACP] = (3Z)-decenoyl-[ACP]. It functions in the pathway lipid metabolism; fatty acid biosynthesis. In terms of biological role, necessary for the introduction of cis unsaturation into fatty acids. Catalyzes the dehydration of (3R)-3-hydroxydecanoyl-ACP to E-(2)-decenoyl-ACP and then its isomerization to Z-(3)-decenoyl-ACP. Can catalyze the dehydratase reaction for beta-hydroxyacyl-ACPs with saturated chain lengths up to 16:0, being most active on intermediate chain length. The protein is 3-hydroxydecanoyl-[acyl-carrier-protein] dehydratase of Brucella ovis (strain ATCC 25840 / 63/290 / NCTC 10512).